We begin with the raw amino-acid sequence, 77 residues long: Conotoxin Cl6.15 (77 aa).

Positions 1-19 (MKLSVKFLLFLMILPLIAG) are cleaved as a signal peptide. Positions 20 to 37 (EDMSDNDAPKSVDVQRNV) are excised as a propeptide. 3 disulfides stabilise this stretch: Cys49-Cys61, Cys55-Cys66, and Cys60-Cys75.

This sequence belongs to the conotoxin I1 superfamily. As to expression, expressed by the venom duct.

The protein localises to the secreted. In Californiconus californicus (California cone), this protein is Conotoxin Cl6.15.